Consider the following 264-residue polypeptide: Zearalenone hydrolase (264 aa).

The region spanning 27 to 207 is the AB hydrolase-1 domain; that stretch reads VLVPDGLGEC…KDLEALRGKP (181 aa). Positions 32, 102, and 103 each coordinate zearalenone. The active site involves S102. Residue E126 is part of the active site. The zearalenone site is built by W183, Y187, S220, and H242. H242 is an active-site residue.

Belongs to the AB hydrolase superfamily. Hydrolase RutD family. In terms of assembly, homodimer.

The enzyme catalyses zearalenone + H2O = hydrolyzed zearalenone + H(+). Its function is as follows. Lactonohydrolase that specifically hydrolyzes and deactivates the mycotoxin zearalenone (ZEN) and its zearalenol (ZOL) derivatives. ZHD101 prefers ZEN to ZOL as its substrate, but ZOL, especially the alpha-form, shows higher estrogenic toxicity than ZEN. In Bionectria ochroleuca (Gliocladium roseum), this protein is Zearalenone hydrolase.